We begin with the raw amino-acid sequence, 227 residues long: Cytochrome c oxidase subunit 2 (227 aa).

At 1–14 (MAYPFQLGLQDATS) the chain is on the mitochondrial intermembrane side. The helical transmembrane segment at 15-45 (PIMEELTNFHDHTLMIVFLISTLVLYIISLM) threads the bilayer. Over 46–59 (LTTKLTHTSTMDAQ) the chain is Mitochondrial matrix. The helical transmembrane segment at 60 to 87 (EVETIWTILPAVILILIALPSLRILYMM) threads the bilayer. The Mitochondrial intermembrane portion of the chain corresponds to 88-227 (DEINNPVLTV…YFENWSASMI (140 aa)). Cu cation contacts are provided by histidine 161, cysteine 196, glutamate 198, cysteine 200, histidine 204, and methionine 207. Glutamate 198 contacts Mg(2+). Tyrosine 218 is modified (phosphotyrosine).

This sequence belongs to the cytochrome c oxidase subunit 2 family. Component of the cytochrome c oxidase (complex IV, CIV), a multisubunit enzyme composed of 14 subunits. The complex is composed of a catalytic core of 3 subunits MT-CO1, MT-CO2 and MT-CO3, encoded in the mitochondrial DNA, and 11 supernumerary subunits COX4I, COX5A, COX5B, COX6A, COX6B, COX6C, COX7A, COX7B, COX7C, COX8 and NDUFA4, which are encoded in the nuclear genome. The complex exists as a monomer or a dimer and forms supercomplexes (SCs) in the inner mitochondrial membrane with NADH-ubiquinone oxidoreductase (complex I, CI) and ubiquinol-cytochrome c oxidoreductase (cytochrome b-c1 complex, complex III, CIII), resulting in different assemblies (supercomplex SCI(1)III(2)IV(1) and megacomplex MCI(2)III(2)IV(2)). Found in a complex with TMEM177, COA6, COX18, COX20, SCO1 and SCO2. Interacts with TMEM177 in a COX20-dependent manner. Interacts with COX20. Interacts with COX16. It depends on Cu cation as a cofactor.

Its subcellular location is the mitochondrion inner membrane. It carries out the reaction 4 Fe(II)-[cytochrome c] + O2 + 8 H(+)(in) = 4 Fe(III)-[cytochrome c] + 2 H2O + 4 H(+)(out). Component of the cytochrome c oxidase, the last enzyme in the mitochondrial electron transport chain which drives oxidative phosphorylation. The respiratory chain contains 3 multisubunit complexes succinate dehydrogenase (complex II, CII), ubiquinol-cytochrome c oxidoreductase (cytochrome b-c1 complex, complex III, CIII) and cytochrome c oxidase (complex IV, CIV), that cooperate to transfer electrons derived from NADH and succinate to molecular oxygen, creating an electrochemical gradient over the inner membrane that drives transmembrane transport and the ATP synthase. Cytochrome c oxidase is the component of the respiratory chain that catalyzes the reduction of oxygen to water. Electrons originating from reduced cytochrome c in the intermembrane space (IMS) are transferred via the dinuclear copper A center (CU(A)) of subunit 2 and heme A of subunit 1 to the active site in subunit 1, a binuclear center (BNC) formed by heme A3 and copper B (CU(B)). The BNC reduces molecular oxygen to 2 water molecules using 4 electrons from cytochrome c in the IMS and 4 protons from the mitochondrial matrix. The sequence is that of Cytochrome c oxidase subunit 2 (MT-CO2) from Leopoldamys sabanus (Long-tailed giant rat).